The primary structure comprises 349 residues: tRNA pseudouridine synthase D (349 aa).

Residue F27 participates in substrate binding. Catalysis depends on D80, which acts as the Nucleophile. N129 contributes to the substrate binding site. Positions 155-303 (GVPNYFGAQR…VEAARRAMLL (149 aa)) constitute a TRUD domain. F329 contacts substrate.

Belongs to the pseudouridine synthase TruD family.

The enzyme catalyses uridine(13) in tRNA = pseudouridine(13) in tRNA. Responsible for synthesis of pseudouridine from uracil-13 in transfer RNAs. This is tRNA pseudouridine synthase D from Shigella boydii serotype 4 (strain Sb227).